The chain runs to 85 residues: Sugar transporter SemiSWEET (85 aa).

In terms of domain architecture, PQ-loop spans 2–59 (ENLIGYVAAFLTTVSFLPQVLRVVMTKQTRDISRNMYIMFFLGVVLWFVYGILRSDLP). Helical transmembrane passes span 5-25 (IGYV…LRVV), 33-53 (ISRN…VYGI), and 57-77 (DLPI…ILYY).

As to quaternary structure, homodimer.

The protein resides in the cell membrane. Its function is as follows. The homodimer mediates transmembrane sugar transport down a concentration gradient. Transport is probably effected by rocking-type movements, where a cargo-binding cavity opens first on one and then on the other side of the membrane. The protein is Sugar transporter SemiSWEET of Leptospira biflexa serovar Patoc (strain Patoc 1 / ATCC 23582 / Paris).